We begin with the raw amino-acid sequence, 359 residues long: 3-isopropylmalate dehydrogenase (359 aa).

Positions 96, 106, 134, and 223 each coordinate substrate. 3 residues coordinate Mg(2+): Asp223, Asp247, and Asp251. 281–293 contributes to the NAD(+) binding site; sequence GSAPDIAGQGIAN.

It belongs to the isocitrate and isopropylmalate dehydrogenases family. LeuB type 1 subfamily. In terms of assembly, homodimer. Mg(2+) is required as a cofactor. Mn(2+) serves as cofactor.

The protein localises to the cytoplasm. The catalysed reaction is (2R,3S)-3-isopropylmalate + NAD(+) = 4-methyl-2-oxopentanoate + CO2 + NADH. It participates in amino-acid biosynthesis; L-leucine biosynthesis; L-leucine from 3-methyl-2-oxobutanoate: step 3/4. Its function is as follows. Catalyzes the oxidation of 3-carboxy-2-hydroxy-4-methylpentanoate (3-isopropylmalate) to 3-carboxy-4-methyl-2-oxopentanoate. The product decarboxylates to 4-methyl-2 oxopentanoate. The protein is 3-isopropylmalate dehydrogenase of Chromohalobacter salexigens (strain ATCC BAA-138 / DSM 3043 / CIP 106854 / NCIMB 13768 / 1H11).